The sequence spans 148 residues: Large ribosomal subunit protein bL28c (148 aa).

Residues 1–71 constitute a chloroplast transit peptide; that stretch reads MAASGMLISN…PLKPSLQPVA (71 aa).

Component of the chloroplast large ribosomal subunit (LSU). Mature 70S chloroplast ribosomes of higher plants consist of a small (30S) and a large (50S) subunit. The 30S small subunit contains 1 molecule of ribosomal RNA (16S rRNA) and 24 different proteins. The 50S large subunit contains 3 rRNA molecules (23S, 5S and 4.5S rRNA) and 33 different proteins.

The protein resides in the plastid. The protein localises to the chloroplast. Its function is as follows. Component of the chloroplast ribosome (chloro-ribosome), a dedicated translation machinery responsible for the synthesis of chloroplast genome-encoded proteins, including proteins of the transcription and translation machinery and components of the photosynthetic apparatus. The chain is Large ribosomal subunit protein bL28c (RPL28) from Spinacia oleracea (Spinach).